The sequence spans 231 residues: Large ribosomal subunit protein uL1 (231 aa).

It belongs to the universal ribosomal protein uL1 family. Part of the 50S ribosomal subunit.

Its function is as follows. Binds directly to 23S rRNA. The L1 stalk is quite mobile in the ribosome, and is involved in E site tRNA release. In terms of biological role, protein L1 is also a translational repressor protein, it controls the translation of the L11 operon by binding to its mRNA. The polypeptide is Large ribosomal subunit protein uL1 (Cupriavidus pinatubonensis (strain JMP 134 / LMG 1197) (Cupriavidus necator (strain JMP 134))).